Consider the following 556-residue polypeptide: Arginine--tRNA ligase 1 (556 aa).

The 'HIGH' region motif lies at 132–142 (ANPTGNLHLGH).

It belongs to the class-I aminoacyl-tRNA synthetase family. Monomer.

It localises to the cytoplasm. The catalysed reaction is tRNA(Arg) + L-arginine + ATP = L-arginyl-tRNA(Arg) + AMP + diphosphate. This is Arginine--tRNA ligase 1 (argS1) from Halalkalibacterium halodurans (strain ATCC BAA-125 / DSM 18197 / FERM 7344 / JCM 9153 / C-125) (Bacillus halodurans).